A 338-amino-acid chain; its full sequence is Ketol-acid reductoisomerase (NADP(+)) (338 aa).

Residues 1–181 (MKVYYDKDCN…GGGRSGIIET (181 aa)) form the KARI N-terminal Rossmann domain. Residues 24–27 (YGSQ), R47, S50, S52, and 82–85 (DETQ) contribute to the NADP(+) site. The active site involves H107. An NADP(+)-binding site is contributed by G133. Residues 182–327 (NFREETETDL…ARLRAMMPWI (146 aa)) enclose the KARI C-terminal knotted domain. Positions 190, 194, 226, and 230 each coordinate Mg(2+). Position 251 (S251) interacts with substrate.

The protein belongs to the ketol-acid reductoisomerase family. Mg(2+) is required as a cofactor.

It carries out the reaction (2R)-2,3-dihydroxy-3-methylbutanoate + NADP(+) = (2S)-2-acetolactate + NADPH + H(+). The catalysed reaction is (2R,3R)-2,3-dihydroxy-3-methylpentanoate + NADP(+) = (S)-2-ethyl-2-hydroxy-3-oxobutanoate + NADPH + H(+). It participates in amino-acid biosynthesis; L-isoleucine biosynthesis; L-isoleucine from 2-oxobutanoate: step 2/4. The protein operates within amino-acid biosynthesis; L-valine biosynthesis; L-valine from pyruvate: step 2/4. Its function is as follows. Involved in the biosynthesis of branched-chain amino acids (BCAA). Catalyzes an alkyl-migration followed by a ketol-acid reduction of (S)-2-acetolactate (S2AL) to yield (R)-2,3-dihydroxy-isovalerate. In the isomerase reaction, S2AL is rearranged via a Mg-dependent methyl migration to produce 3-hydroxy-3-methyl-2-ketobutyrate (HMKB). In the reductase reaction, this 2-ketoacid undergoes a metal-dependent reduction by NADPH to yield (R)-2,3-dihydroxy-isovalerate. This is Ketol-acid reductoisomerase (NADP(+)) from Pelobacter propionicus (strain DSM 2379 / NBRC 103807 / OttBd1).